The chain runs to 944 residues: Protein translocase subunit SecA (944 aa).

ATP contacts are provided by residues Gln87, 105-109, and Asp494; that span reads GEGKT. The segment at 894 to 944 is disordered; it reads HAAAAGDGEEKPRPKQETVVRTQPKVGRNDPCPCGSGKKYKKCHGATEAAV. Positions 901–911 are enriched in basic and acidic residues; sequence GEEKPRPKQET. Zn(2+) is bound by residues Cys925, Cys927, Cys936, and His937.

The protein belongs to the SecA family. In terms of assembly, monomer and homodimer. Part of the essential Sec protein translocation apparatus which comprises SecA, SecYEG and auxiliary proteins SecDF-YajC and YidC. It depends on Zn(2+) as a cofactor.

It is found in the cell inner membrane. Its subcellular location is the cytoplasm. It catalyses the reaction ATP + H2O + cellular proteinSide 1 = ADP + phosphate + cellular proteinSide 2.. Functionally, part of the Sec protein translocase complex. Interacts with the SecYEG preprotein conducting channel. Has a central role in coupling the hydrolysis of ATP to the transfer of proteins into and across the cell membrane, serving as an ATP-driven molecular motor driving the stepwise translocation of polypeptide chains across the membrane. The polypeptide is Protein translocase subunit SecA (Anaeromyxobacter sp. (strain Fw109-5)).